The primary structure comprises 279 residues: MNLASSACLLLLFLLGIAQALPVQNEEGHEEGNKEGHGEEGVEEGDEDDFVDFTTRILTSNNNTDQLLLEGDLVAPTNRNAMKCWYNSCFWKKASNGFVVIPYVISSQYSRGEVATIEGAMRAFNGRTCIRFVRRTNEYDFISVVSKNGCYSELGRKGGQQELSLNRGGCMYSGIIQHELNHALGFQHEQTRSDRDSYVRINWQNIIPASAYNFNKHDTNNLNTPYDYSSIMHYGRDAFSIAYGRDSITPIPNPNVPIGQRNGMSRWDITRSNVLYNCR.

Positions M1–A20 are cleaved as a signal peptide. Residues L21 to R79 constitute a propeptide, activation peptide. Basic and acidic residues predominate over residues E26–E40. Positions E26 to D46 are disordered. N-linked (GlcNAc...) asparagine glycosylation occurs at N62. A Peptidase M12A domain is found at N80 to R279. 3 disulfides stabilise this stretch: C84–C89, C129–C278, and C150–C170. H178 lines the Zn(2+) pocket. The active site involves E179. H182 and H188 together coordinate Zn(2+).

Zn(2+) serves as cofactor.

It is found in the zymogen granule. The catalysed reaction is Hydrolysis of the inner layer of fish egg envelope. Also hydrolysis of casein and small molecule substrates such as succinyl-Leu-Leu-Val-Tyr-|-7-(4-methyl)coumarylamide.. Its function is as follows. Participates in the breakdown of the egg envelope, which is derived from the egg extracellular matrix, at the time of hatching. Thus allowing the newly hatched fish to swim free. HCE binds tightly to the egg envelope while it exerts the choriolytic swelling action. This chain is High choriolytic enzyme 2 (hceb), found in Oryzias latipes (Japanese rice fish).